The sequence spans 170 residues: Ureidoglycolate lyase (170 aa).

Belongs to the ureidoglycolate lyase family. In terms of assembly, homodimer. It depends on Ni(2+) as a cofactor.

The catalysed reaction is (S)-ureidoglycolate = urea + glyoxylate. It participates in nitrogen metabolism; (S)-allantoin degradation. Catalyzes the catabolism of the allantoin degradation intermediate (S)-ureidoglycolate, generating urea and glyoxylate. Involved in the utilization of allantoin as nitrogen source. This chain is Ureidoglycolate lyase, found in Stutzerimonas stutzeri (strain A1501) (Pseudomonas stutzeri).